The primary structure comprises 247 residues: Pleckstrin homology domain-containing family F member 2 (247 aa).

Positions 35–131 (VLIGEGVLTK…WMSHINKCVS (97 aa)) constitute a PH domain. The FYVE-type zinc-finger motif lies at 152–212 (DSEATVCMRC…VCEFCYKQLS (61 aa)). Zn(2+)-binding residues include Cys-158, Cys-161, Cys-175, Cys-178, Cys-183, Cys-186, Cys-204, and Cys-207. Residues 213–247 (TGATLPPRSDSYSRQGSDFGSNNISDDDDDDDSSD) form a disordered region. Positions 222–236 (DSYSRQGSDFGSNNI) are enriched in polar residues. Acidic residues predominate over residues 237–247 (SDDDDDDDSSD).

It localises to the early endosome membrane. The protein localises to the endoplasmic reticulum. May play a role in early endosome fusion upstream of RAB5, hence regulating receptor trafficking and fluid-phase transport. Enhances cellular sensitivity to TNF-induced apoptosis. The protein is Pleckstrin homology domain-containing family F member 2 (plekhf2) of Danio rerio (Zebrafish).